A 722-amino-acid polypeptide reads, in one-letter code: Peroxisomal bifunctional enzyme (722 aa).

Residues 1-281 (MAEYLRLPHS…FAEKSANKWS (281 aa)) form an enoyl-CoA hydratase / isomerase region. Position 2 is a blocked amino end (Ala) (A2). The residue at position 38 (K38) is an N6-succinyllysine. G100 serves as a coordination point for substrate. K173 bears the N6-acetyllysine; alternate mark. N6-succinyllysine; alternate is present on K173. K182 carries the N6-succinyllysine modification. N6-acetyllysine; alternate occurs at positions 190 and 218. N6-succinyllysine; alternate is present on residues K190 and K218. K241 bears the N6-succinyllysine mark. Position 249 is an N6-acetyllysine (K249). K253 is subject to N6-succinyllysine. At K275 the chain carries N6-acetyllysine; alternate. An N6-succinyllysine; alternate modification is found at K275. N6-succinyllysine occurs at positions 279, 289, and 330. Residues 282–571 (TPSGASWKTA…DMLCEAGRFG (290 aa)) form a 3-hydroxyacyl-CoA dehydrogenase region. 3 positions are modified to N6-acetyllysine: K345, K359, and K463. K531 is subject to N6-succinyllysine. The residue at position 547 (T547) is a Phosphothreonine. K576 is modified (N6-succinyllysine). 3 positions are modified to N6-acetyllysine; alternate: K583, K590, and K709. N6-succinyllysine; alternate occurs at positions 583, 590, and 709. The short motif at 720–722 (SKL) is the Microbody targeting signal element. K721 carries the N6-succinyllysine modification.

This sequence in the N-terminal section; belongs to the enoyl-CoA hydratase/isomerase family. The protein in the C-terminal section; belongs to the 3-hydroxyacyl-CoA dehydrogenase family. In terms of assembly, monomer. Post-translationally, acetylated, leading to enhanced enzyme activity. Acetylation is enhanced by up to 80% after treatment either with trichostin A (TCA) or with nicotinamide (NAM) with highest increase on Lys-345. Acetylation and enzyme activity increased by about 1.5% on addition of fatty acids.

The protein localises to the peroxisome. It carries out the reaction a (3S)-3-hydroxyacyl-CoA = a (2E)-enoyl-CoA + H2O. It catalyses the reaction a 4-saturated-(3S)-3-hydroxyacyl-CoA = a (3E)-enoyl-CoA + H2O. The catalysed reaction is a (3Z)-enoyl-CoA = a 4-saturated (2E)-enoyl-CoA. The enzyme catalyses a (3E)-enoyl-CoA = a 4-saturated (2E)-enoyl-CoA. It carries out the reaction a (3S)-3-hydroxyacyl-CoA + NAD(+) = a 3-oxoacyl-CoA + NADH + H(+). It catalyses the reaction (2S,3S)-3-hydroxy-2-methylbutanoyl-CoA = (2E)-2-methylbut-2-enoyl-CoA + H2O. The catalysed reaction is (3E,5Z)-tetradecadienoyl-CoA = (2E,5Z)-tetradecadienoyl-CoA. The enzyme catalyses (3E,5Z)-octadienoyl-CoA = (2E,5Z)-octadienoyl-CoA. It carries out the reaction (3S)-hydroxydecanoyl-CoA + NAD(+) = 3-oxodecanoyl-CoA + NADH + H(+). It catalyses the reaction (3E)-decenoyl-CoA = (2E)-decenoyl-CoA. The catalysed reaction is (3Z)-hexenoyl-CoA = (2E)-hexenoyl-CoA. The enzyme catalyses (3E)-hexenoyl-CoA = (2E)-hexenoyl-CoA. It carries out the reaction (3S)-hydroxydecanoyl-CoA = (2E)-decenoyl-CoA + H2O. It catalyses the reaction (3S)-hydroxyhexanoyl-CoA = (2E)-hexenoyl-CoA + H2O. The catalysed reaction is (3S)-hydroxyhexadecanoyl-CoA + NAD(+) = 3-oxohexadecanoyl-CoA + NADH + H(+). The enzyme catalyses (3S)-hydroxyhexadecanoyl-CoA = (2E)-hexadecenoyl-CoA + H2O. It carries out the reaction (2E)-hexadecenedioyl-CoA + H2O = (3S)-hydroxyhexadecanedioyl-CoA. It catalyses the reaction (3S)-hydroxyhexadecanedioyl-CoA + NAD(+) = 3-oxohexadecanedioyl-CoA + NADH + H(+). It functions in the pathway lipid metabolism; fatty acid beta-oxidation. With respect to regulation, enzyme activity enhanced by acetylation. Peroxisomal trifunctional enzyme possessing 2-enoyl-CoA hydratase, 3-hydroxyacyl-CoA dehydrogenase, and delta 3, delta 2-enoyl-CoA isomerase activities. Catalyzes two of the four reactions of the long chain fatty acids peroxisomal beta-oxidation pathway. Can also use branched-chain fatty acids such as 2-methyl-2E-butenoyl-CoA as a substrate, which is hydrated into (2S,3S)-3-hydroxy-2-methylbutanoyl-CoA. Optimal isomerase for 2,5 double bonds into 3,5 form isomerization in a range of enoyl-CoA species. Also able to isomerize both 3-cis and 3-trans double bonds into the 2-trans form in a range of enoyl-CoA species. Regulates the amount of medium-chain dicarboxylic fatty acids which are essential regulators of all fatty acid oxidation pathways. Also involved in the degradation of long-chain dicarboxylic acids through peroxisomal beta-oxidation. The sequence is that of Peroxisomal bifunctional enzyme from Rattus norvegicus (Rat).